Here is a 447-residue protein sequence, read N- to C-terminus: Glyceraldehyde-3-phosphate dehydrogenase GAPB, chloroplastic (447 aa).

The transit peptide at 1–80 directs the protein to the chloroplast; the sequence is MATHAALAVS…STPVRGETVA (80 aa). NADP(+)-binding positions include 91–92, Asp115, and Arg160; that span reads RI. Residues 234-236, Thr265, Arg280, 293-294, and Arg316 contribute to the D-glyceraldehyde 3-phosphate site; these read SCT and TG. Residue Cys235 is the Nucleophile of the active site. NADP(+) is bound at residue Asn399.

It belongs to the glyceraldehyde-3-phosphate dehydrogenase family. In terms of assembly, tetramer of either four A chains (GAPDH 2) or two A and two B chains (GAPDH 1). As to expression, expressed in leaves and stems.

The protein localises to the plastid. Its subcellular location is the chloroplast membrane. It localises to the chloroplast stroma. It carries out the reaction D-glyceraldehyde 3-phosphate + phosphate + NADP(+) = (2R)-3-phospho-glyceroyl phosphate + NADPH + H(+). Its pathway is carbohydrate biosynthesis; Calvin cycle. In terms of biological role, involved in the photosynthetic reductive pentose phosphate pathway (Calvin-Benson cycle). Catalyzes the reduction of 1,3-diphosphoglycerate by NADPH. In Arabidopsis thaliana (Mouse-ear cress), this protein is Glyceraldehyde-3-phosphate dehydrogenase GAPB, chloroplastic (GAPB).